A 999-amino-acid chain; its full sequence is Probable beta-galactosidase C (999 aa).

The first 21 residues, 1–21 (MFFFRFLTTVLLLFNAKLLVA), serve as a signal peptide directing secretion. The N-linked (GlcNAc...) asparagine glycan is linked to Asn25. The substrate site is built by Tyr80, Asn125, Glu127, and Asn185. The active-site Proton donor is Glu186. Asn195 carries N-linked (GlcNAc...) asparagine glycosylation. A substrate-binding site is contributed by Tyr249. An intrachain disulfide couples Cys255 to Cys302. Asn274 is a glycosylation site (N-linked (GlcNAc...) asparagine). Glu285 acts as the Nucleophile in catalysis. Substrate is bound at residue Tyr351. Asn389, Asn441, Asn512, Asn519, Asn600, Asn675, Asn713, Asn757, Asn808, and Asn897 each carry an N-linked (GlcNAc...) asparagine glycan.

Belongs to the glycosyl hydrolase 35 family.

It is found in the secreted. The catalysed reaction is Hydrolysis of terminal non-reducing beta-D-galactose residues in beta-D-galactosides.. In terms of biological role, cleaves beta-linked terminal galactosyl residues from gangliosides, glycoproteins, and glycosaminoglycans. This chain is Probable beta-galactosidase C (lacC), found in Talaromyces marneffei (strain ATCC 18224 / CBS 334.59 / QM 7333) (Penicillium marneffei).